The chain runs to 177 residues: Deoxyuridine 5'-triphosphate nucleotidohydrolase (177 aa).

Residues 83–85 (RSG), Asn-96, 100–102 (TID), and Lys-110 each bind substrate. A compositionally biased stretch (polar residues) spans 150-163 (DLTSSQTDLSNQPN). Positions 150–177 (DLTSSQTDLSNQPNTGRGTGGFGSTGQK) are disordered. The segment covering 166 to 177 (RGTGGFGSTGQK) has biased composition (gly residues).

It belongs to the dUTPase family. The cofactor is Mg(2+).

The enzyme catalyses dUTP + H2O = dUMP + diphosphate + H(+). The protein operates within pyrimidine metabolism; dUMP biosynthesis; dUMP from dCTP (dUTP route): step 2/2. Functionally, this enzyme is involved in nucleotide metabolism: it produces dUMP, the immediate precursor of thymidine nucleotides and it decreases the intracellular concentration of dUTP so that uracil cannot be incorporated into DNA. In Bartonella bacilliformis (strain ATCC 35685 / KC583 / Herrer 020/F12,63), this protein is Deoxyuridine 5'-triphosphate nucleotidohydrolase.